A 263-amino-acid chain; its full sequence is MEGEQIMEYVQETPIIPKRIIHYSIPKQMITKPAPHVEMTLVANTFRDMDLPQHPVIHDCWQNKEYSTQRYSGNVAQQRLSFEEHPNEECQNSVGLIKRVSTFFKKRPLSRKNSIKSIGDVKSEARNRGEGLLGEVDNLNEQNVRENLTSEHEKSPEGDSKRYGLFSFEETPPIQVLEQGNINSELSSFKNTSLAENKRSSDSFVSLKPGEDEHSPLEISTCGNLTEREDLQSGEERFDSAAQNIKVASMKEKKKIFKGNKTD.

The interval 198–224 (KRSSDSFVSLKPGEDEHSPLEISTCGN) is disordered.

This is an uncharacterized protein from Saccharomyces cerevisiae (strain ATCC 204508 / S288c) (Baker's yeast).